A 443-amino-acid chain; its full sequence is Adenylyltransferase and sulfurtransferase UBA4 (443 aa).

Residues glycine 83, aspartate 104, serine 111–arginine 115, lysine 128, and aspartate 172–threonine 173 contribute to the ATP site. Residues cysteine 214 and cysteine 217 each contribute to the Zn(2+) site. Catalysis depends on cysteine 231, which acts as the Glycyl thioester intermediate; for adenylyltransferase activity. Positions 292 and 295 each coordinate Zn(2+). Residues glutamine 343 to proline 441 form the Rhodanese domain. The active-site Cysteine persulfide intermediate; for sulfurtransferase activity is the cysteine 400.

In the N-terminal section; belongs to the HesA/MoeB/ThiF family. UBA4 subfamily. The cofactor is Zn(2+).

Its subcellular location is the cytoplasm. The protein resides in the cytosol. Its pathway is tRNA modification; 5-methoxycarbonylmethyl-2-thiouridine-tRNA biosynthesis. Its function is as follows. Plays a central role in 2-thiolation of mcm(5)S(2)U at tRNA wobble positions of cytosolic tRNA(Lys), tRNA(Glu) and tRNA(Gln). Acts by mediating the C-terminal thiocarboxylation of sulfur carrier URM1. Its N-terminus first activates URM1 as acyl-adenylate (-COAMP), then the persulfide sulfur on the catalytic cysteine is transferred to URM1 to form thiocarboxylation (-COSH) of its C-terminus. The reaction probably involves hydrogen sulfide that is generated from the persulfide intermediate and that acts as a nucleophile towards URM1. Subsequently, a transient disulfide bond is formed. Does not use thiosulfate as sulfur donor; NFS1 probably acting as a sulfur donor for thiocarboxylation reactions. Prior mcm(5) tRNA modification by the elongator complex is required for 2-thiolation. May also be involved in protein urmylation. This is Adenylyltransferase and sulfurtransferase UBA4 from Scheffersomyces stipitis (strain ATCC 58785 / CBS 6054 / NBRC 10063 / NRRL Y-11545) (Yeast).